Consider the following 422-residue polypeptide: Histidine--tRNA ligase (422 aa).

It belongs to the class-II aminoacyl-tRNA synthetase family. As to quaternary structure, homodimer.

Its subcellular location is the cytoplasm. The enzyme catalyses tRNA(His) + L-histidine + ATP = L-histidyl-tRNA(His) + AMP + diphosphate + H(+). The chain is Histidine--tRNA ligase from Alcanivorax borkumensis (strain ATCC 700651 / DSM 11573 / NCIMB 13689 / SK2).